The following is a 390-amino-acid chain: Protein STRICTOSIDINE SYNTHASE-LIKE 3 (390 aa).

Positions 1-25 (MAMSILAKIFLVFAIYCAIDPFSHS) are cleaved as a signal peptide. 2 N-linked (GlcNAc...) asparagine glycosylation sites follow: asparagine 95 and asparagine 108.

It belongs to the strictosidine synthase family.

The protein resides in the vacuole. This chain is Protein STRICTOSIDINE SYNTHASE-LIKE 3, found in Arabidopsis thaliana (Mouse-ear cress).